Consider the following 330-residue polypeptide: ADP-L-glycero-D-manno-heptose-6-epimerase (330 aa).

Residues 11 to 12 (FI), 32 to 33 (DD), Gln-39, Gln-54, 75 to 79 (QGACA), and Asn-92 contribute to the NADP(+) site. Tyr-139 (proton acceptor) is an active-site residue. Lys-143 contributes to the NADP(+) binding site. Position 168 (Asn-168) interacts with substrate. 2 residues coordinate NADP(+): Val-169 and Lys-177. The Proton acceptor role is filled by Lys-177. Substrate is bound by residues Arg-179, His-186, 200-203 (FGEH), Arg-213, and Tyr-292.

The protein belongs to the NAD(P)-dependent epimerase/dehydratase family. HldD subfamily. Homopentamer. Requires NADP(+) as cofactor.

It carries out the reaction ADP-D-glycero-beta-D-manno-heptose = ADP-L-glycero-beta-D-manno-heptose. It functions in the pathway nucleotide-sugar biosynthesis; ADP-L-glycero-beta-D-manno-heptose biosynthesis; ADP-L-glycero-beta-D-manno-heptose from D-glycero-beta-D-manno-heptose 7-phosphate: step 4/4. Its function is as follows. Catalyzes the interconversion between ADP-D-glycero-beta-D-manno-heptose and ADP-L-glycero-beta-D-manno-heptose via an epimerization at carbon 6 of the heptose. This Pseudomonas aeruginosa (strain UCBPP-PA14) protein is ADP-L-glycero-D-manno-heptose-6-epimerase.